The sequence spans 826 residues: BLOC-2 complex member HPS5 homolog (826 aa).

WD repeat units lie at residues 22 to 61, 63 to 102, and 110 to 149; these read KHHNRIKYTCFDISDSYIIFGASSGSLYLFNRNGKFLLLI, NKHGAITSLSISANSKYVAFATQRSLICVYAVNLSAQATP, and DQSVQVTCIHWTQDEKQFYYGDSRGQVSLVLLSSFIGHSL. The segment covering 422-446 has biased composition (polar residues); it reads ALDTHSSGGSSATTERSLSGGSSSR. Residues 422–447 form a disordered region; that stretch reads ALDTHSSGGSSATTERSLSGGSSSRA.

Belongs to the HPS5 family. Expressed in eye pigment granules.

Its function is as follows. Has a role in the biogenesis of eye pigment granules. Eye pigment granules are specialized forms of late endosomes or lysosomes. Biogenesis of pigment granules in the eye requires molecular components required for protein delivery to lysosomes. This chain is BLOC-2 complex member HPS5 homolog, found in Drosophila melanogaster (Fruit fly).